A 309-amino-acid chain; its full sequence is Homoserine kinase (309 aa).

91–101 (PIGSGLGSSAC) is an ATP binding site.

It belongs to the GHMP kinase family. Homoserine kinase subfamily.

The protein localises to the cytoplasm. It carries out the reaction L-homoserine + ATP = O-phospho-L-homoserine + ADP + H(+). Its pathway is amino-acid biosynthesis; L-threonine biosynthesis; L-threonine from L-aspartate: step 4/5. Catalyzes the ATP-dependent phosphorylation of L-homoserine to L-homoserine phosphate. The sequence is that of Homoserine kinase from Salmonella arizonae (strain ATCC BAA-731 / CDC346-86 / RSK2980).